Here is a 288-residue protein sequence, read N- to C-terminus: Bifunctional protein FolD (288 aa).

NADP(+) contacts are provided by residues 166 to 168 and Ile232; that span reads GAS.

It belongs to the tetrahydrofolate dehydrogenase/cyclohydrolase family. As to quaternary structure, homodimer.

It catalyses the reaction (6R)-5,10-methylene-5,6,7,8-tetrahydrofolate + NADP(+) = (6R)-5,10-methenyltetrahydrofolate + NADPH. The enzyme catalyses (6R)-5,10-methenyltetrahydrofolate + H2O = (6R)-10-formyltetrahydrofolate + H(+). It functions in the pathway one-carbon metabolism; tetrahydrofolate interconversion. In terms of biological role, catalyzes the oxidation of 5,10-methylenetetrahydrofolate to 5,10-methenyltetrahydrofolate and then the hydrolysis of 5,10-methenyltetrahydrofolate to 10-formyltetrahydrofolate. This chain is Bifunctional protein FolD, found in Acidithiobacillus ferrooxidans (strain ATCC 23270 / DSM 14882 / CIP 104768 / NCIMB 8455) (Ferrobacillus ferrooxidans (strain ATCC 23270)).